The chain runs to 301 residues: UDP-N-acetylenolpyruvoylglucosamine reductase 1 (301 aa).

An FAD-binding PCMH-type domain is found at 29–196 (KIGGPADILI…LEAVFQLQAG (168 aa)). The active site involves arginine 174. Catalysis depends on serine 225, which acts as the Proton donor. The active site involves glutamate 295.

The protein belongs to the MurB family. The cofactor is FAD.

The protein localises to the cytoplasm. It catalyses the reaction UDP-N-acetyl-alpha-D-muramate + NADP(+) = UDP-N-acetyl-3-O-(1-carboxyvinyl)-alpha-D-glucosamine + NADPH + H(+). The protein operates within cell wall biogenesis; peptidoglycan biosynthesis. Cell wall formation. In Bacillus cereus (strain ATCC 14579 / DSM 31 / CCUG 7414 / JCM 2152 / NBRC 15305 / NCIMB 9373 / NCTC 2599 / NRRL B-3711), this protein is UDP-N-acetylenolpyruvoylglucosamine reductase 1 (murB1).